The sequence spans 205 residues: Large ribosomal subunit protein uL3c (205 aa).

Positions 129-154 (SRGPMSHGSKNHRQPGSIGAGTTPGR) are disordered.

It belongs to the universal ribosomal protein uL3 family. In terms of assembly, part of the 50S ribosomal subunit.

The protein resides in the plastid. It is found in the chloroplast. Functionally, one of the primary rRNA binding proteins, it binds directly near the 3'-end of the 23S rRNA, where it nucleates assembly of the 50S subunit. In Pyropia yezoensis (Susabi-nori), this protein is Large ribosomal subunit protein uL3c (rpl3).